The following is a 580-amino-acid chain: Efflux pump dotC (580 aa).

Residues 1–34 (MSEDHTKADNLSEKDPHSPERSDSSSHEDAHARE) show a composition bias toward basic and acidic residues. The disordered stretch occupies residues 1 to 45 (MSEDHTKADNLSEKDPHSPERSDSSSHEDAHAREEEESSDDDGAL). An N-linked (GlcNAc...) asparagine glycan is attached at asparagine 10. Over residues 35–44 (EEESSDDDGA) the composition is skewed to acidic residues. Residues 49–69 (PASLIAIVMIALSLAVFLSAL) traverse the membrane as a helical segment. N-linked (GlcNAc...) asparagine glycosylation occurs at asparagine 86. 13 consecutive transmembrane segments (helical) span residues 89–109 (AAYT…TPIW), 127–147 (ALFM…MLIT), 153–173 (GAAG…LFSL), 181–201 (GMIG…GGAF), 209–229 (WCFY…FFFL), 242–262 (FAAI…MFLF), 275–295 (SATV…FGLV), 318–338 (ALLV…YLPL), 348–368 (PILA…SAAA), 380–400 (LIPM…LINF), 409–429 (LIIY…APLV), 444–466 (TATF…QVLY), and 519–539 (SPMW…ILLV). The segment at 559 to 580 (KKAEAERKAERQAKDLEKAQKS) is disordered.

Belongs to the major facilitator superfamily. TCR/Tet family.

It localises to the cell membrane. Its subcellular location is the vacuole membrane. In terms of biological role, efflux pump; part of the gene cluster that mediates the biosynthesis of dothistromin (DOTH), a polyketide toxin very similar in structure to the aflatoxin precursor, versicolorin B. One function of dotC may be to transport early-stage dothistromin biosynthetic intermediates from the cytoplasm into vacuoles, thereby affecting the rate of dothistromin production. The chain is Efflux pump dotC from Dothistroma septosporum (strain NZE10 / CBS 128990) (Red band needle blight fungus).